Here is a 222-residue protein sequence, read N- to C-terminus: UPF0758 protein YicR (222 aa).

The MPN domain occupies 100–222; it reads PLLSPEMTRE…YVSFAERGWI (123 aa). Zn(2+)-binding residues include His171, His173, and Asp184. The short motif at 171–184 is the JAMM motif element; that stretch reads HNHPSGCAEPSKAD.

This sequence belongs to the UPF0758 family. YicR subfamily.

This is UPF0758 protein YicR from Shigella dysenteriae serotype 1 (strain Sd197).